The following is an 883-amino-acid chain: HTH-type transcriptional regulator AlkS (883 aa).

The HTH luxR-type domain maps to glutamate 816–glycine 881. Positions asparagine 840–arginine 859 form a DNA-binding region, H-T-H motif.

It participates in hydrocarbon metabolism; alkane degradation. In terms of biological role, may act as a transcriptional regulator of AlkB. The polypeptide is HTH-type transcriptional regulator AlkS (alkS) (Pseudomonas putida (Arthrobacter siderocapsulatus)).